The primary structure comprises 264 residues: S-adenosylmethionine decarboxylase proenzyme (264 aa).

The Schiff-base intermediate with substrate; via pyruvic acid role is filled by Ser-113. Pyruvic acid (Ser); by autocatalysis is present on Ser-113. Residue His-118 is the Proton acceptor; for processing activity of the active site. Cys-141 serves as the catalytic Proton donor; for catalytic activity.

This sequence belongs to the prokaryotic AdoMetDC family. Type 2 subfamily. In terms of assembly, heterooctamer of four alpha and four beta chains arranged as a tetramer of alpha/beta heterodimers. Pyruvate serves as cofactor. In terms of processing, is synthesized initially as an inactive proenzyme. Formation of the active enzyme involves a self-maturation process in which the active site pyruvoyl group is generated from an internal serine residue via an autocatalytic post-translational modification. Two non-identical subunits are generated from the proenzyme in this reaction, and the pyruvate is formed at the N-terminus of the alpha chain, which is derived from the carboxyl end of the proenzyme. The post-translation cleavage follows an unusual pathway, termed non-hydrolytic serinolysis, in which the side chain hydroxyl group of the serine supplies its oxygen atom to form the C-terminus of the beta chain, while the remainder of the serine residue undergoes an oxidative deamination to produce ammonia and the pyruvoyl group blocking the N-terminus of the alpha chain.

The enzyme catalyses S-adenosyl-L-methionine + H(+) = S-adenosyl 3-(methylsulfanyl)propylamine + CO2. It functions in the pathway amine and polyamine biosynthesis; S-adenosylmethioninamine biosynthesis; S-adenosylmethioninamine from S-adenosyl-L-methionine: step 1/1. Functionally, catalyzes the decarboxylation of S-adenosylmethionine to S-adenosylmethioninamine (dcAdoMet), the propylamine donor required for the synthesis of the polyamines spermine and spermidine from the diamine putrescine. This chain is S-adenosylmethionine decarboxylase proenzyme, found in Stenotrophomonas maltophilia (strain R551-3).